A 379-amino-acid polypeptide reads, in one-letter code: Cyclic di-GMP phosphodiesterase PdeB (379 aa).

The region spanning 114 to 310 (FYKKQKKIFI…PLDFIVELND (197 aa)) is the HD-GYP domain.

The cofactor is Mn(2+).

The catalysed reaction is 3',3'-c-di-GMP + 2 H2O = 2 GMP + 2 H(+). In terms of biological role, phosphodiesterase (PDE) that catalyzes the hydrolysis of cyclic diguanylate (c-di-GMP) to GMP. The sequence is that of Cyclic di-GMP phosphodiesterase PdeB from Borreliella burgdorferi (strain ATCC 35210 / DSM 4680 / CIP 102532 / B31) (Borrelia burgdorferi).